A 265-amino-acid chain; its full sequence is Pro-opiomelanocortin (265 aa).

Residues 1-26 (MPRLCSSRSGALLLALLLQASMEVRG) form the signal peptide. Disulfide bonds link Cys-28-Cys-50 and Cys-34-Cys-46. Residue Thr-71 is glycosylated (O-linked (GalNAc...) threonine). Phe-87 carries the phenylalanine amide modification. The interval 89 to 138 (RRNGSSSSGVGGAAQKREEEVAVGEGPGPRGDDAETGPREDKRSYSMEHF) is disordered. A glycan (N-linked (GlcNAc...) asparagine) is linked at Asn-91. A propeptide spanning residues 106 to 129 (EEEVAVGEGPGPRGDDAETGPRED) is cleaved from the precursor. Basic and acidic residues predominate over residues 118-138 (RGDDAETGPREDKRSYSMEHF). Residue Ser-132 is modified to N-acetylserine; in Corticotropin. Val-144 bears the Valine amide mark. Ser-162 is modified (phosphoserine). Residue Glu-173 is modified to Pyrrolidone carboxylic acid (Glu); partial. Tyr-200 is modified (sulfotyrosine). The tract at residues 209 to 240 (EAAEKKDSGPYKMEHFRWGSPPKDKRYGGFMT) is disordered. Basic and acidic residues predominate over residues 210-235 (AAEKKDSGPYKMEHFRWGSPPKDKRY).

This sequence belongs to the POMC family. Post-translationally, specific enzymatic cleavages at paired basic residues yield the different active peptides. In terms of tissue distribution, ACTH and MSH are produced by the pituitary gland.

Its subcellular location is the secreted. In terms of biological role, stimulates the adrenal glands to release cortisol. Anorexigenic peptide. Increases the pigmentation of skin by increasing melanin production in melanocytes. Functionally, endogenous orexigenic opiate. Its function is as follows. Endogenous opiate. This chain is Pro-opiomelanocortin (POMC), found in Bos taurus (Bovine).